The chain runs to 476 residues: Aspartate kinase Ask_Ect (476 aa).

The ACT domain maps to 405 to 476 (SAIGSDLKVK…ENHGDVIAAA (72 aa)).

Belongs to the aspartokinase family. Monomer.

Its subcellular location is the cytoplasm. The catalysed reaction is L-aspartate + ATP = 4-phospho-L-aspartate + ADP. Its pathway is amine and polyamine biosynthesis; ectoine biosynthesis. Allosterically and strongly feedback inhibited by tryptophan. The presence of either 650 mM NaCl or KCl reduces the inhibition by tryptophan. Functionally, involved in the biosynthesis of L-aspartate-beta-semialdehyde, which is an intermediate in the biosynthesis of ectoine, a highly soluble organic osmolyte, called compatible solute. Ectoine is used to avoid excessive water efflux, plasmolysis, molecular crowding of the cytoplasm, and cessation of growth in high salinity environments. Catalyzes the phosphorylation of the beta-carboxyl group of L-aspartate to yield 4-phospho-L-aspartate. The polypeptide is Aspartate kinase Ask_Ect (ask) (Stutzerimonas stutzeri (strain A1501) (Pseudomonas stutzeri)).